Here is a 469-residue protein sequence, read N- to C-terminus: Tetratricopeptide repeat protein 38 (469 aa).

TPR repeat units lie at residues 107–140 (REML…HPTD), 179–212 (SYVK…DQTD), and 251–284 (CHVY…QCFA).

This sequence belongs to the TTC38 family.

This is Tetratricopeptide repeat protein 38 (ttc38) from Xenopus tropicalis (Western clawed frog).